Reading from the N-terminus, the 1301-residue chain is MGKRTAENSAANGEGEEKHPEIGVDGRPEKEPTFQDYMRVFKYASKWDLLAYTVGVIASIGVGITLPLLNIVFGQFASKFSDYAGTETLPGDEFRSKLSELCLYLLGLFLGRLVLGYITNFAFRMTGVRITSAIRQDYFTALFSQSVHVLDSMPPGYATTIITTTGNTLQLGISEKLGVFVEYNATMIASIIVAFIYSWQLSLVTFTAVVFITFSVSLVLPYITKGQTNQTKSEAMAMSVASEAMSGIRMIVAYGAESRIGSKYGRFVDEAKKHAQFAGPFIALQYGLVFFSSYAAFGLAFWYGTRLLLEDKINQLGAIIVVLFSVMMIVTAMERISTPLLAVSKATVAACEFFTVIDAPRPEPGHLTDPDVSATEDIILEDVTFAYPSRPHVKILDNLNLRIETGKVTAIVGPSGSGKSTIVGLVERWYGLKDQYVISKPVEKPTDKKNNGGKEEDEQELQELSFAGDETGPPVDLHGRISTCGHSLDDINVKWWRSQIGLVQQEPFLFNDTIYSNVLNGLIGTKWENEPDEKKREMVHEACKEAFADEFIEKLPEGYNTAVGEVGIKLSGGQRQRIAIARAIIRRPAILILDEATSAIDVRGERIVQAALDRASKNRTTIVIAHRLSTIKKADRIVVLRQGQVIQSGTHEGLLTDEAGLYYNLVNAQALSLGEQKEGNEVIAKEERPSSVHEKAHTESTIEEKPLEKKPKNKGLLSSFGRFFYETKSNWWMMALTLFFSACAGAAVPFQAWLFAKVIIVFGYLPDESKVRSESSFWSLMWTVLAISAGLAYCATFFLSTRTASTIRAKYQKQYFLYILHQKVAFFDHDDHSQGTMAARSAEDPRQLEELLGSNMASVFIALWTLMGTIAIALAFAWKLALVSLCVVVPILLAAGYWRMRYEIKFEEMNNAVFVDSSKFASEAIGAFRTVASFTLEVAICDQFRTLNSNHVKDAFKKARWVSLLYAFSDSATIGCQAIVLYYGGRLLLSGEYDLESFFVCFMSVLNAGETTGRALSFGPNVAQVRAAANRILGLRDSQVKDGPEATGEQFISHGDGIEIELENIYFKYPTRDVPVFDGLSLTIEKGQFAALVGASGSGKSSIVSLLERFYDPDHGRILCNGQDIATNNVYTYRRHLSLVAQESSLFQGTLRENILLGVEDTVDDAAVHRVCQEASIHEFIMSLPEGYQTQVGSRGVTLSGGQRQRVAIARALMRNPDILLLDEATSSLDSESEKLVQEAFERAGKGRTMVVVAHRLATVQNADVIFVLGEGKLIEKGSHRELLAARGVYWQMCQSQALDK.

A disordered region spans residues 1–30; that stretch reads MGKRTAENSAANGEGEEKHPEIGVDGRPEK. The span at 15–30 shows a compositional bias: basic and acidic residues; the sequence is GEEKHPEIGVDGRPEK. A run of 4 helical transmembrane segments spans residues 54 to 74, 103 to 123, 177 to 197, and 203 to 223; these read VGVIASIGVGITLPLLNIVFG, LYLLGLFLGRLVLGYITNFAF, LGVFVEYNATMIASIIVAFIY, and LVTFTAVVFITFSVSLVLPYI. The ABC transmembrane type-1 1 domain occupies 54 to 345; that stretch reads VGVIASIGVG…ISTPLLAVSK (292 aa). N-linked (GlcNAc...) asparagine glycosylation occurs at N229. A run of 2 helical transmembrane segments spans residues 281 to 301 and 313 to 333; these read FIALQYGLVFFSSYAAFGLAF and INQLGAIIVVLFSVMMIVTAM. The ABC transporter 1 domain occupies 378–667; sequence IILEDVTFAY…EAGLYYNLVN (290 aa). 413 to 420 is an ATP binding site; the sequence is GPSGSGKS. The segment covering 442–454 has biased composition (basic and acidic residues); it reads VEKPTDKKNNGGK. The tract at residues 442-461 is disordered; sequence VEKPTDKKNNGGKEEDEQEL. N-linked (GlcNAc...) asparagine glycans are attached at residues N511 and N618. Residues 682 to 708 are disordered; sequence VIAKEERPSSVHEKAHTESTIEEKPLE. One can recognise an ABC transmembrane type-1 2 domain in the interval 735–1024; the sequence is ALTLFFSACA…ALSFGPNVAQ (290 aa). 6 helical membrane-spanning segments follow: residues 745–765, 779–799, 858–878, 880–900, 961–981, and 987–1007; these read GAAVPFQAWLFAKVIIVFGYL, SLMWTVLAISAGLAYCATFFL, SVFIALWTLMGTIAIALAFAW, LALVSLCVVVPILLAAGYWRM, WVSLLYAFSDSATIGCQAIVL, and LLLSGEYDLESFFVCFMSVLN. One can recognise an ABC transporter 2 domain in the interval 1060 to 1296; that stretch reads IELENIYFKY…RGVYWQMCQS (237 aa). 1094-1101 serves as a coordination point for ATP; the sequence is GASGSGKS.

It belongs to the ABC transporter superfamily. ABCB family. Multidrug resistance exporter (TC 3.A.1.201) subfamily.

It localises to the cell membrane. ABC transporter; part of the gene cluster that mediates the biosynthesis of beauvericin (BEA), a non-ribosomal cyclic hexadepsipeptide that shows antibiotic, antifungal, insecticidal, and cancer cell antiproliferative and antihaptotactic activity. Functions as a regulator of beauvericin production, rather than in BEA transport out of the cell. Beauvericin has low toxicity to the producing fungus and BEA3 does not play a role in detoxification and self-protection of the producing fungus. The protein is ABC transporter BEA3 of Gibberella fujikuroi (strain CBS 195.34 / IMI 58289 / NRRL A-6831) (Bakanae and foot rot disease fungus).